Consider the following 484-residue polypeptide: MYSRIVLNDVEKKVVNLLKKTADFIESKSSSSSSLEVRLAGGWVRDKLLGLSSDDLDVTLNKVTGVDFANSIFEYVHSLDSDSVIPYKDALGKLTVNPDQSKHLETATLSLFDLDIDFVGLRAESYDDKSRIPSVTPGTVETDALRRDFTVNTLFFNIRTEKIEDITKRGYKDLQTKVLVTPISPLQSFLEDPLRILRGIRFASRFEFTIDPSVVSAIQDPKVCKAFEKKVSKERVGEEIEKMLKGANAKLALQLLYSTNTYQFTFDTLPAEKEFQIPKALEATESLFQSLALTFPKLMKLSEDEKIGLWLYVALIPWSSQTVMVKKKQFYIPAIIAKDKLKLRSTYVNQLNQCCTFNPIFDELVNDTSTKNCSSIGSLIRQLNKSWEVVFLTSVIYSCCKTPAASVSNTFSSYKSLYDFIYDKNLQNAYNMKPLLDGKQIMKNVGVKPGPQLKETMDNMISWQFKHPEGSVEDCVAYLQSLKI.

The short motif at 122 to 124 is the B/A element element; it reads RAE. Residues 125-142 form a flexible loop region; sequence SYDDKSRIPSVTPGTVET. Positions 234–244 match the ERhxxExxxhh motif motif; that stretch reads ERVGEEIEKML.

It belongs to the tRNA nucleotidyltransferase/poly(A) polymerase family.

It localises to the cytoplasm. It carries out the reaction a tRNA with a 3' CC end + ATP = a tRNA with a 3' CCA end + diphosphate. Its function is as follows. tRNA nucleotidyltransferase involved in the synthesis of the tRNA CCA terminus. In contrast to what is usually observed in eukaryotes for which one enzyme synthesizes the whole tRNA CCA terminus, in S.pombe, cca1 specifically adds two cytidine residues to a tRNA substrate lacking this sequence while cca2 specifically adds the terminal adenosine residue thereby completing the CCA sequence. In Schizosaccharomyces pombe (strain 972 / ATCC 24843) (Fission yeast), this protein is tRNA nucleotidyltransferase cca2.